The sequence spans 207 residues: Thiamine-phosphate synthase (207 aa).

Residues 38-42 (QYRNK) and N70 each bind 4-amino-2-methyl-5-(diphosphooxymethyl)pyrimidine. Residues D71 and D90 each contribute to the Mg(2+) site. Residue S109 coordinates 4-amino-2-methyl-5-(diphosphooxymethyl)pyrimidine. 136-138 (TAT) provides a ligand contact to 2-[(2R,5Z)-2-carboxy-4-methylthiazol-5(2H)-ylidene]ethyl phosphate. A 4-amino-2-methyl-5-(diphosphooxymethyl)pyrimidine-binding site is contributed by K139. 2-[(2R,5Z)-2-carboxy-4-methylthiazol-5(2H)-ylidene]ethyl phosphate is bound by residues G165 and 185 to 186 (VS).

The protein belongs to the thiamine-phosphate synthase family. It depends on Mg(2+) as a cofactor.

The catalysed reaction is 2-[(2R,5Z)-2-carboxy-4-methylthiazol-5(2H)-ylidene]ethyl phosphate + 4-amino-2-methyl-5-(diphosphooxymethyl)pyrimidine + 2 H(+) = thiamine phosphate + CO2 + diphosphate. It catalyses the reaction 2-(2-carboxy-4-methylthiazol-5-yl)ethyl phosphate + 4-amino-2-methyl-5-(diphosphooxymethyl)pyrimidine + 2 H(+) = thiamine phosphate + CO2 + diphosphate. It carries out the reaction 4-methyl-5-(2-phosphooxyethyl)-thiazole + 4-amino-2-methyl-5-(diphosphooxymethyl)pyrimidine + H(+) = thiamine phosphate + diphosphate. It functions in the pathway cofactor biosynthesis; thiamine diphosphate biosynthesis; thiamine phosphate from 4-amino-2-methyl-5-diphosphomethylpyrimidine and 4-methyl-5-(2-phosphoethyl)-thiazole: step 1/1. In terms of biological role, condenses 4-methyl-5-(beta-hydroxyethyl)thiazole monophosphate (THZ-P) and 2-methyl-4-amino-5-hydroxymethyl pyrimidine pyrophosphate (HMP-PP) to form thiamine monophosphate (TMP). This Xanthomonas campestris pv. campestris (strain 8004) protein is Thiamine-phosphate synthase.